The following is a 278-amino-acid chain: HTH-type transcriptional activator RhaS (278 aa).

Positions asparagine 174–glycine 272 constitute an HTH araC/xylS-type domain. 2 consecutive DNA-binding regions (H-T-H motif) follow at residues aspartate 191–threonine 212 and valine 239–phenylalanine 262.

As to quaternary structure, binds DNA as a dimer.

The protein localises to the cytoplasm. In terms of biological role, activates expression of the rhaBAD and rhaT operons. This Escherichia coli (strain SE11) protein is HTH-type transcriptional activator RhaS.